A 357-amino-acid polypeptide reads, in one-letter code: Protein MGF 360-22R (357 aa).

An ANK repeat occupies 66–98 (DLNLALMKAVQENNYELIMLFTEWGADINLGLI).

Belongs to the asfivirus MGF 360 family.

Functionally, plays a role in virus cell tropism, and may be required for efficient virus replication in macrophages. This chain is Protein MGF 360-22R, found in African swine fever virus (isolate Tick/Malawi/Lil 20-1/1983) (ASFV).